Consider the following 458-residue polypeptide: UPF0210 protein MMP1427 (458 aa).

The protein belongs to the UPF0210 family.

In Methanococcus maripaludis (strain DSM 14266 / JCM 13030 / NBRC 101832 / S2 / LL), this protein is UPF0210 protein MMP1427.